The following is a 198-amino-acid chain: Glycerol-3-phosphate acyltransferase (198 aa).

A run of 5 helical transmembrane segments spans residues 6 to 26 (MLPVALLIGYLLGSIPFGLIL), 56 to 78 (LAAATLLGDALKGTAAVIIAGYL), 83 to 101 (AAMLAGLGAFLGHLFPVWL), 113 to 133 (IGILIGLLWPYAIFFCLVWLA), and 154 to 174 (IVLWAFGHTALAALFALLTLL).

The protein belongs to the PlsY family. As to quaternary structure, probably interacts with PlsX.

It is found in the cell inner membrane. The enzyme catalyses an acyl phosphate + sn-glycerol 3-phosphate = a 1-acyl-sn-glycero-3-phosphate + phosphate. Its pathway is lipid metabolism; phospholipid metabolism. Catalyzes the transfer of an acyl group from acyl-phosphate (acyl-PO(4)) to glycerol-3-phosphate (G3P) to form lysophosphatidic acid (LPA). This enzyme utilizes acyl-phosphate as fatty acyl donor, but not acyl-CoA or acyl-ACP. This chain is Glycerol-3-phosphate acyltransferase, found in Bradyrhizobium sp. (strain ORS 278).